Here is a 425-residue protein sequence, read N- to C-terminus: Glucan 1,3-beta-glucosidase (425 aa).

A signal peptide spans Met-1–Ala-17. Glu-214 functions as the Proton donor in the catalytic mechanism. 2 disulfides stabilise this stretch: Cys-301–Cys-423 and Cys-326–Cys-352. Lys-328 functions as the Nucleophile in the catalytic mechanism.

The protein belongs to the glycosyl hydrolase 5 (cellulase A) family.

It localises to the secreted. The enzyme catalyses Successive hydrolysis of beta-D-glucose units from the non-reducing ends of (1-&gt;3)-beta-D-glucans, releasing alpha-glucose.. Beta-glucanases participate in the metabolism of beta-glucan, the main structural component of the cell wall. It could also function biosynthetically as a transglycosylase. This Candida oleophila (Yeast) protein is Glucan 1,3-beta-glucosidase (EXG1).